A 375-amino-acid polypeptide reads, in one-letter code: 23S rRNA (uracil(747)-C(5))-methyltransferase RlmC (375 aa).

4 residues coordinate [4Fe-4S] cluster: Cys3, Cys11, Cys14, and Cys87. S-adenosyl-L-methionine-binding residues include Gln212, Phe241, Glu262, and Asn307. Catalysis depends on Cys334, which acts as the Nucleophile.

The protein belongs to the class I-like SAM-binding methyltransferase superfamily. RNA M5U methyltransferase family. RlmC subfamily.

The catalysed reaction is uridine(747) in 23S rRNA + S-adenosyl-L-methionine = 5-methyluridine(747) in 23S rRNA + S-adenosyl-L-homocysteine + H(+). In terms of biological role, catalyzes the formation of 5-methyl-uridine at position 747 (m5U747) in 23S rRNA. The protein is 23S rRNA (uracil(747)-C(5))-methyltransferase RlmC of Escherichia fergusonii (strain ATCC 35469 / DSM 13698 / CCUG 18766 / IAM 14443 / JCM 21226 / LMG 7866 / NBRC 102419 / NCTC 12128 / CDC 0568-73).